Here is a 192-residue protein sequence, read N- to C-terminus: Large ribosomal subunit protein uL10 (192 aa).

This sequence belongs to the universal ribosomal protein uL10 family. In terms of assembly, part of the ribosomal stalk of the 50S ribosomal subunit. The N-terminus interacts with L11 and the large rRNA to form the base of the stalk. The C-terminus forms an elongated spine to which L12 dimers bind in a sequential fashion forming a multimeric L10(L12)X complex.

Functionally, forms part of the ribosomal stalk, playing a central role in the interaction of the ribosome with GTP-bound translation factors. The chain is Large ribosomal subunit protein uL10 from Gloeobacter violaceus (strain ATCC 29082 / PCC 7421).